The primary structure comprises 316 residues: Vacuolar morphogenesis protein 7 (316 aa).

One can recognise a PX domain in the interval 1–124 (MAANSVGKMS…QDFLQLSKPN (124 aa)). Residues 168-186 (RARTKLHKLRERLEQDVQK) adopt a coiled-coil conformation. The region spanning 250–312 (MQMVRDQEQE…QIANKKARHF (63 aa)) is the t-SNARE coiled-coil homology domain.

As to quaternary structure, possibly multimeric. Associates with VAM3.

It localises to the vacuole. Its function is as follows. Essential for proper morphogenesis of the vacuole. May exist as structural reinforcement on the surface of the vacuolar membrane and be required for maintenance against rupture by osmotic pressure. The chain is Vacuolar morphogenesis protein 7 (VAM7) from Saccharomyces cerevisiae (strain ATCC 204508 / S288c) (Baker's yeast).